The primary structure comprises 1088 residues: Calcium-transporting ATPase 5, plasma membrane-type (1088 aa).

The segment covering 1–11 (MESASSSLATS) has biased composition (low complexity). The disordered stretch occupies residues 1-32 (MESASSSLATSGRRRSSSGGGGGSWGSIGSAA). The Cytoplasmic portion of the chain corresponds to 1–198 (MESASSSLAT…FLWDACKDLT (198 aa)). A helical membrane pass occupies residues 199–219 (LIILMVAAAVSLALGITTEGI). The Extracellular portion of the chain corresponds to 220-221 (KE). The chain crosses the membrane as a helical span at residues 222-242 (GWYDGASIAFAVLLVVVVTAT). Topologically, residues 243 to 338 (SDYKQSLQFQ…MSGCKVADGY (96 aa)) are cytoplasmic. Residues 339-359 (GTMLVTAVGINTEWGLLMASI) traverse the membrane as a helical segment. Residues 360–375 (SEDSGEETPLQVRLNG) lie on the Extracellular side of the membrane. Residues 376 to 396 (VATFIGMVGLSVALAVLVVLL) traverse the membrane as a helical segment. Topologically, residues 397 to 425 (ARYFTGHTYNPDGSVQYVKGKMGVGQTIR) are cytoplasmic. A helical membrane pass occupies residues 426–446 (GIVGIFTVAVTIVVVAVPEGL). The Extracellular segment spans residues 447–851 (PLAVTLTLAF…GRSVYANIQK (405 aa)). Asp486 functions as the 4-aspartylphosphate intermediate in the catalytic mechanism. 3 N-linked (GlcNAc...) asparagine glycosylation sites follow: Asn532, Asn569, and Asn737. The Mg(2+) site is built by Asp794 and Asp798. The chain crosses the membrane as a helical span at residues 852–872 (FIQFQLTVNVAALIINVVAAV). Over 873 to 880 (SSGNVPLN) the chain is Cytoplasmic. A helical transmembrane segment spans residues 881–901 (AVQLLWVNLIMDTLGALALAT). At 902-919 (EPPTDHLMQRPPVGRREP) the chain is on the extracellular side. Residues 920–940 (LITNVMWRNLIIMALFQVIVL) traverse the membrane as a helical segment. Over 941-1000 (LTLNFRGTSLLQLKNDNQAHADKVKNTFIFNTFVLCQVFNEFNARKPDELNIFKGITGNH) the chain is Cytoplasmic. Residues 1001 to 1021 (LFMAIVAITVVLQALIVEFLG) form a helical membrane-spanning segment. Residues 1022 to 1030 (KFTSTTRLT) lie on the Extracellular side of the membrane. The helical transmembrane segment at 1031–1051 (WQLWLVSIGLAFFSWPLAFVG) threads the bilayer. Residues 1052–1088 (KLIPVPERPLGDFFACCCPGSKQAADAKGDDADHSDV) lie on the Cytoplasmic side of the membrane.

It belongs to the cation transport ATPase (P-type) (TC 3.A.3) family. Type IIB subfamily. As to quaternary structure, interacts with NOH1.

The protein resides in the cell membrane. It carries out the reaction Ca(2+)(in) + ATP + H2O = Ca(2+)(out) + ADP + phosphate + H(+). With respect to regulation, activated by calmodulin. Functionally, this magnesium-dependent enzyme catalyzes the hydrolysis of ATP coupled with the translocation of calcium from the cytosol out of the cell, into the endoplasmic reticulum, or into organelles. Involved in salt and drought stress tolerance. Involved in cold stress tolerance. In Oryza sativa subsp. japonica (Rice), this protein is Calcium-transporting ATPase 5, plasma membrane-type.